The chain runs to 275 residues: 2,3,4,5-tetrahydropyridine-2,6-dicarboxylate N-succinyltransferase (275 aa).

Belongs to the transferase hexapeptide repeat family.

Its subcellular location is the cytoplasm. The enzyme catalyses (S)-2,3,4,5-tetrahydrodipicolinate + succinyl-CoA + H2O = (S)-2-succinylamino-6-oxoheptanedioate + CoA. The protein operates within amino-acid biosynthesis; L-lysine biosynthesis via DAP pathway; LL-2,6-diaminopimelate from (S)-tetrahydrodipicolinate (succinylase route): step 1/3. This Paraburkholderia phytofirmans (strain DSM 17436 / LMG 22146 / PsJN) (Burkholderia phytofirmans) protein is 2,3,4,5-tetrahydropyridine-2,6-dicarboxylate N-succinyltransferase.